The primary structure comprises 148 residues: 3-hydroxyacyl-[acyl-carrier-protein] dehydratase FabZ (148 aa).

Histidine 55 is a catalytic residue.

It belongs to the thioester dehydratase family. FabZ subfamily.

It is found in the cytoplasm. It carries out the reaction a (3R)-hydroxyacyl-[ACP] = a (2E)-enoyl-[ACP] + H2O. Functionally, involved in unsaturated fatty acids biosynthesis. Catalyzes the dehydration of short chain beta-hydroxyacyl-ACPs and long chain saturated and unsaturated beta-hydroxyacyl-ACPs. The protein is 3-hydroxyacyl-[acyl-carrier-protein] dehydratase FabZ of Haemophilus influenzae (strain ATCC 51907 / DSM 11121 / KW20 / Rd).